A 194-amino-acid chain; its full sequence is uncharacterized protein (194 aa).

Disordered regions lie at residues 1 to 21 (MPKGRRGSQNPKMSQRPAPPL) and 73 to 97 (PATVPPPPPGLGPPSERPCPPPWPS). Over residues 73-96 (PATVPPPPPGLGPPSERPCPPPWP) the composition is skewed to pro residues.

This is an uncharacterized protein from Mus musculus (Mouse).